Consider the following 403-residue polypeptide: MVTASLPTPVQPEFDTTIHRRKTRPVPVGAVTVGGGHPVVVQSMINEDTLDVDGSVAGIRRLHEIGCEIVRVTVPSMAHAKALADIKQKLQATYQAVPLVADVHHNGMKIALEVAKHVDKVRINPGLYVFEKPDAQREGYSDQEFAEIGEKIRETLEPLVISLRDQGKSMRIGVNHGSLSERMLFTYGDTPEGMVQSALEFIKICESLDFRNLVVSMKASRVPVMLAAYRLMVKRMDELGMDYPLHLGVTEAGDGEYGRIKSTAGIATLLADGIGDTIRVSLTEAPEKEIPVCYSILQALGLRKTMVEYVACPSCGRTLFNLEDVLHEVREATKHLTGLDIAVMGCIVNGPGEMADADYGYVGKQAGYIALYRGREEIKRVPETDGVQELINLIKADGRWVDP.

Residues cysteine 312, cysteine 315, cysteine 346, and glutamate 353 each contribute to the [4Fe-4S] cluster site.

The protein belongs to the IspG family. It depends on [4Fe-4S] cluster as a cofactor.

It carries out the reaction (2E)-4-hydroxy-3-methylbut-2-enyl diphosphate + 2 oxidized [2Fe-2S]-[ferredoxin] + H2O = 2-C-methyl-D-erythritol 2,4-cyclic diphosphate + 2 reduced [2Fe-2S]-[ferredoxin] + H(+). The protein operates within isoprenoid biosynthesis; isopentenyl diphosphate biosynthesis via DXP pathway; isopentenyl diphosphate from 1-deoxy-D-xylulose 5-phosphate: step 5/6. Its function is as follows. Converts 2C-methyl-D-erythritol 2,4-cyclodiphosphate (ME-2,4cPP) into 1-hydroxy-2-methyl-2-(E)-butenyl 4-diphosphate. The polypeptide is 4-hydroxy-3-methylbut-2-en-1-yl diphosphate synthase (ferredoxin) (Synechocystis sp. (strain ATCC 27184 / PCC 6803 / Kazusa)).